The primary structure comprises 258 residues: Spindlin-2A (258 aa).

Residues 1–23 are compositionally biased toward low complexity; sequence MKTPNAQEAEGQQTRAAAGRATG. Residues 1 to 49 form a disordered region; that stretch reads MKTPNAQEAEGQQTRAAAGRATGSANMTKKKVSQKKQRGRPSSQPRRNI. Over residues 28–39 the composition is skewed to basic residues; that stretch reads TKKKVSQKKQRG. Tudor-like domain stretches follow at residues 50–99, 129–178, and 210–255; these read VGCR…LELH, IGKA…YQLL, and IGKH…YDLV. 2 histone H3K4me3 and H3R8me2a binding regions span residues Glu-138 and 246 to 248; that span reads DFH.

This sequence belongs to the SPIN/STSY family. As to quaternary structure, interacts with C11orf84/SPINDOC.

The protein localises to the nucleus. Functionally, may be involved in the regulation of cell cycle progression. Exhibits H3K4me3-binding activity. The chain is Spindlin-2A (SPIN2A) from Homo sapiens (Human).